A 251-amino-acid polypeptide reads, in one-letter code: MINQYFQKINEHLELVLSHEKDNLKKAAHMVSEAIQNGGIVQLFGCGHSHILTEEVFYRAGGLVPVKPIFVEPLMLHEGAVRSSMLERMNDLAQNFINHEDIRPEDVFFVLSTSGRNPVPIDVALAAKEKGAYTIAITSLEYSKSQPSRHKSGRLLYEVVDLVIDNHCVRGDAILAHPNVSVPFAPTSTVIGSAILNAVFAEAIVLMAENGIEPPIFLSGNIEGADEHNRRWVEKYKERIPVLVEGHQLSQ.

The SIS domain maps to 31–214; the sequence is VSEAIQNGGI…VLMAENGIEP (184 aa).

Belongs to the UPF0309 family.

The sequence is that of UPF0309 protein GK1441 from Geobacillus kaustophilus (strain HTA426).